A 208-amino-acid chain; its full sequence is Putative thymidylate kinase (208 aa).

The defective ATP-binding stretch occupies residues 8–15; it reads GIDGSGVS.

It belongs to the thymidylate kinase family.

It catalyses the reaction dTMP + ATP = dTDP + ADP. In Aeropyrum pernix (strain ATCC 700893 / DSM 11879 / JCM 9820 / NBRC 100138 / K1), this protein is Putative thymidylate kinase (tmk).